We begin with the raw amino-acid sequence, 176 residues long: Pituitary adenylate cyclase-activating polypeptide (176 aa).

An N-terminal signal peptide occupies residues 1-24 (MTMCSGARLALLVYGILMHSSVYG). A propeptide spanning residues 25 to 80 (SPAASGLRFPGIRPENEVYDEDGNPQQDFYDSESLGVGSPASALRDAYALYYPAEE) is cleaved from the precursor. The disordered stretch occupies residues 98-135 (QPSARRSPADAHGQGLGWDPGGSADDDSEPLSKRHSDG). The interval 150-158 (VKKYLAAVL) is important for receptor binding. Leucine 158 carries the leucine amide modification. Lysine 169 carries the post-translational modification Lysine amide. Residues 173-176 (IPYL) constitute a propeptide that is removed on maturation.

It belongs to the glucagon family. Interacts with ADCYAP1R1 (via N-terminal extracellular domain); both PACAP27 and PACAP38 neuropeptides function as ligand for the ADCYAP1R1 receptor, which modulates the activity of downstream effectors. Interacts with VIPR1 and VIPR2; functions as ligand for VIPR1 and VIPR2 receptors, which modulate the activity of downstream effectors.

The protein resides in the secreted. PACAP is a neuropeptide involved in diverse array of physiological processes through activating the PACAP subfamily of class B1 G protein-coupled receptors: VIP receptor 1 (VIPR1), VIP receptor 2 (VIPR2), and PACAP type I receptor (ADCYAP1R1). Exerts neuroprotective and general cytoprotective effects due to anti-apoptotic, anti-inflammatory, and antioxidant actions. Promotes neuron projection development through the RAPGEF2/Rap1/B-Raf/ERK pathway. In chromaffin cells, induces long-lasting increase of intracellular calcium concentrations and neuroendocrine secretion. Involved in the control of glucose homeostasis, induces insulin secretion by pancreatic beta cells. PACAP exists in two bioactive forms from proteolysis of the same precursor protein, PACAP27 and PACAP38, which differ by eleven amino acid residues in the C-terminus. This Bos taurus (Bovine) protein is Pituitary adenylate cyclase-activating polypeptide (ADCYAP1).